The sequence spans 66 residues: Large ribosomal subunit protein bL33c (66 aa).

This sequence belongs to the bacterial ribosomal protein bL33 family.

Its subcellular location is the plastid. It localises to the chloroplast. In Nasturtium officinale (Watercress), this protein is Large ribosomal subunit protein bL33c.